Reading from the N-terminus, the 124-residue chain is uncharacterized protein (124 aa).

3 helical membrane-spanning segments follow: residues 13–33 (LIQIVGVIFALFALSRVVLQL), 43–63 (GLFWIFVWGFVVIFLVFPEFF), and 71–91 (GVGRGVDALIYISIVVLFYLI).

To M.thermoautotrophicum MTH137.

It localises to the cell membrane. This is an uncharacterized protein from Methanocaldococcus jannaschii (strain ATCC 43067 / DSM 2661 / JAL-1 / JCM 10045 / NBRC 100440) (Methanococcus jannaschii).